We begin with the raw amino-acid sequence, 323 residues long: Acetyl-coenzyme A carboxylase carboxyl transferase subunit alpha (323 aa).

The region spanning 36 to 293 (ELELLSAKAQ…KEEVVKNLQI (258 aa)) is the CoA carboxyltransferase C-terminal domain.

The protein belongs to the AccA family. In terms of assembly, acetyl-CoA carboxylase is a heterohexamer composed of biotin carboxyl carrier protein (AccB), biotin carboxylase (AccC) and two subunits each of ACCase subunit alpha (AccA) and ACCase subunit beta (AccD).

It is found in the cytoplasm. The enzyme catalyses N(6)-carboxybiotinyl-L-lysyl-[protein] + acetyl-CoA = N(6)-biotinyl-L-lysyl-[protein] + malonyl-CoA. It functions in the pathway lipid metabolism; malonyl-CoA biosynthesis; malonyl-CoA from acetyl-CoA: step 1/1. In terms of biological role, component of the acetyl coenzyme A carboxylase (ACC) complex. First, biotin carboxylase catalyzes the carboxylation of biotin on its carrier protein (BCCP) and then the CO(2) group is transferred by the carboxyltransferase to acetyl-CoA to form malonyl-CoA. The polypeptide is Acetyl-coenzyme A carboxylase carboxyl transferase subunit alpha (Carboxydothermus hydrogenoformans (strain ATCC BAA-161 / DSM 6008 / Z-2901)).